The primary structure comprises 352 residues: Maleylacetate reductase (352 aa).

Belongs to the iron-containing alcohol dehydrogenase family.

The enzyme catalyses 3-oxoadipate + NAD(+) = maleylacetate + NADH + H(+). The catalysed reaction is 3-oxoadipate + NADP(+) = maleylacetate + NADPH + H(+). The protein operates within aromatic compound metabolism; 3-chlorocatechol degradation. The sequence is that of Maleylacetate reductase (tcbF) from Pseudomonas sp. (strain P51).